The chain runs to 80 residues: Cell division activator CedA (80 aa).

The protein belongs to the CedA family.

In terms of biological role, activates the cell division inhibited by chromosomal DNA over-replication. This Escherichia coli O1:K1 / APEC protein is Cell division activator CedA.